A 146-amino-acid chain; its full sequence is VHLTPDEKNAVCALWGKVNVEEVGGEALGRLLVVYPWTQRFFDSFGDLSSPSAVMGNPKVKAHGKKVLSAFSDGLQHLDNLCGTFAKLSELHCDKLHVNPENFRLLGNVLVCVLAHHFGKDFTPEVQAAYEKVVAGVATALAHKYH.

V1 is modified (N-acetylvaline). The Globin domain maps to H2–H146. S44 bears the Phosphoserine mark. K59 is modified (N6-acetyllysine). H63 and H92 together coordinate heme b. C93 is modified (S-nitrosocysteine). K144 is modified (N6-acetyllysine).

Belongs to the globin family. In terms of assembly, heterotetramer of two alpha chains and two beta chains. In terms of tissue distribution, red blood cells.

In terms of biological role, involved in oxygen transport from the lung to the various peripheral tissues. In Otolemur crassicaudatus (Brown greater galago), this protein is Hemoglobin subunit beta-1/2 (HBB).